Here is a 255-residue protein sequence, read N- to C-terminus: ATP synthase subunit a 2 (255 aa).

A run of 5 helical transmembrane segments spans residues tryptophan 24–leucine 44, leucine 86–leucine 106, aspartate 131–phenylalanine 151, methionine 205–tryptophan 225, and alanine 226–valine 246.

Belongs to the ATPase A chain family. F-type ATPases have 2 components, CF(1) - the catalytic core - and CF(0) - the membrane proton channel. CF(1) has five subunits: alpha(3), beta(3), gamma(1), delta(1), epsilon(1). CF(0) has three main subunits: a(1), b(2) and c(9-12). The alpha and beta chains form an alternating ring which encloses part of the gamma chain. CF(1) is attached to CF(0) by a central stalk formed by the gamma and epsilon chains, while a peripheral stalk is formed by the delta and b chains.

The protein resides in the cell inner membrane. Key component of the proton channel; it plays a direct role in the translocation of protons across the membrane. In Vibrio campbellii (strain ATCC BAA-1116), this protein is ATP synthase subunit a 2.